Reading from the N-terminus, the 275-residue chain is MTFLDMLRNATAQNQSMLCVGLDPEPSRFPAAMRGDASKIYDFCAAIVDATADLVNSFKPQIAYFAAHRAEDQLEKLMAHMRAVAPHVPIILDAKRGDIGSTAEQYAKEAFERYGADAVTLSPFMGFDSITPYLQYEGKGAFLLCRTSNPGGDDLQAQRLADLPGQPHLFEHVARLAQGPWNTNGQLGLVVGATRPQEIERVREFAPSLPLLIPGVGAQGGDAVATVKAARIGGGPIIINSSRAVLYASQGDDFAAAARTAAQATRQTLQDAAAA.

Lysine 95 functions as the Proton donor in the catalytic mechanism.

The protein belongs to the OMP decarboxylase family. Type 2 subfamily.

The catalysed reaction is orotidine 5'-phosphate + H(+) = UMP + CO2. It participates in pyrimidine metabolism; UMP biosynthesis via de novo pathway; UMP from orotate: step 2/2. The polypeptide is Orotidine 5'-phosphate decarboxylase (Delftia acidovorans (strain DSM 14801 / SPH-1)).